The sequence spans 237 residues: Cytosolic-abundant heat soluble protein 86272 (237 aa).

The disordered stretch occupies residues 96–125 (FKDQEKYSREQAAIARAHDKDLEKKTEEYR). Over residues 111–125 (RAHDKDLEKKTEEYR) the composition is skewed to basic and acidic residues. The stretch at 115–193 (KDLEKKTEEY…MNALEQSKMA (79 aa)) forms a coiled coil. CAHS motif regions lie at residues 124–142 (YRKTAEAEAEKIRKELEKQ) and 161–179 (QKREVDLEAKYAKKELEHE). Residues 204–215 (AGTTVSGGTTVS) are compositionally biased toward low complexity. Residues 204 to 237 (AGTTVSGGTTVSEHTEVHDGKEKKSLGEKIKSLF) form a disordered region. The segment covering 216–237 (EHTEVHDGKEKKSLGEKIKSLF) has biased composition (basic and acidic residues).

Belongs to the Cytosolic-abundant heat soluble protein (CAHS) family.

The protein localises to the cytoplasm. Its function is as follows. CAHS proteins are cytosolic heat soluble proteins that seem to contribute to the anhydrobiosis in tardigrades, but their specific mechanisms are yet to be identified. It is possible that protection during anhydrobiosis might occur via the stabilization of vitrifying small molecules such as sugars, but not via the direct glass transition of CAHS proteins themselves. This Hypsibius exemplaris (Freshwater tardigrade) protein is Cytosolic-abundant heat soluble protein 86272.